A 282-amino-acid polypeptide reads, in one-letter code: Ammonia transport outward protein 2 (282 aa).

A disordered region spans residues 1–34 (MSDREQSSGNTAFENPKALDSSEGEFISENNDQS). Serine 2 carries the N-acetylserine modification. A phosphoserine mark is found at serine 2, serine 7, serine 21, serine 22, serine 28, and serine 40. Topologically, residues 2-86 (SDREQSSGNT…GLAPAPVHKF (85 aa)) are extracellular. The chain crosses the membrane as a helical span at residues 87–107 (ANPAPLGLSGFALTTFVLSMF). Residues 108–119 (NARAQGITIPNV) lie on the Cytoplasmic side of the membrane. Residues 120-140 (VVGCAMFYGGLVQLIAGIWEI) traverse the membrane as a helical segment. The Extracellular segment spans residues 141 to 150 (ALENTFGGTA). The chain crosses the membrane as a helical span at residues 151–171 (LCSFGGFWLSFGAIYIPWFGI). Topologically, residues 172-184 (LDAYKDKESDLGN) are cytoplasmic. Residues 185-205 (ALGFYLLGWALFTFGLSVCTM) form a helical membrane-spanning segment. Residues 206-207 (KS) lie on the Extracellular side of the membrane. A helical membrane pass occupies residues 208 to 228 (TIMFFALFFLLAVTFLLLSIA). Topologically, residues 229–238 (NFTGEVGVTR) are cytoplasmic. The chain crosses the membrane as a helical span at residues 239–259 (AGGVLGVIVAFIAWYNAYAGI). The Extracellular portion of the chain corresponds to 260–282 (ATRQNSYIMVHPFALPSNDKVFF).

The protein belongs to the acetate uptake transporter (AceTr) (TC 2.A.96) family.

The protein resides in the cell membrane. Transporter protein required for ammonia export. Involved in acetate resistance. In Saccharomyces cerevisiae (strain ATCC 204508 / S288c) (Baker's yeast), this protein is Ammonia transport outward protein 2 (ATO2).